Here is a 409-residue protein sequence, read N- to C-terminus: Elongation factor Tu, chloroplastic (409 aa).

The tr-type G domain occupies 10–214 (KPHINIGTIG…QVDSYIPTPT (205 aa)). Positions 19–26 (GHVDHGKT) are G1. Residue 19 to 26 (GHVDHGKT) coordinates GTP. Thr-26 is a binding site for Mg(2+). The residue at position 57 (Lys-57) is an N6-methyllysine. A G2 region spans residues 60–64 (GITIN). The interval 81 to 84 (DCPG) is G3. GTP contacts are provided by residues 81–85 (DCPGH) and 136–139 (NKED). The interval 136-139 (NKED) is G4. The G5 stretch occupies residues 174–176 (SAL).

This sequence belongs to the TRAFAC class translation factor GTPase superfamily. Classic translation factor GTPase family. EF-Tu/EF-1A subfamily.

It localises to the plastid. Its subcellular location is the chloroplast. It carries out the reaction GTP + H2O = GDP + phosphate + H(+). Its function is as follows. GTP hydrolase that promotes the GTP-dependent binding of aminoacyl-tRNA to the A-site of ribosomes during protein biosynthesis. The polypeptide is Elongation factor Tu, chloroplastic (tufA) (Euglena gracilis).